Consider the following 283-residue polypeptide: Elongation factor Ts (283 aa).

Positions 80–83 (TDFV) are involved in Mg(2+) ion dislocation from EF-Tu.

This sequence belongs to the EF-Ts family.

It is found in the cytoplasm. Associates with the EF-Tu.GDP complex and induces the exchange of GDP to GTP. It remains bound to the aminoacyl-tRNA.EF-Tu.GTP complex up to the GTP hydrolysis stage on the ribosome. The sequence is that of Elongation factor Ts from Enterobacter sp. (strain 638).